We begin with the raw amino-acid sequence, 603 residues long: Prostaglandin G/H synthase 2 (603 aa).

Positions 1–17 (MLLPCALLAALLAAGHA) are cleaved as a signal peptide. An EGF-like domain is found at 18 to 55 (ANPCCSLPCQNRGVCMTTGFDRYECDCTRTGYYGENCT). Disulfide bonds link Cys-21–Cys-32, Cys-22–Cys-145, Cys-26–Cys-42, and Cys-44–Cys-54. N-linked (GlcNAc...) asparagine glycans are attached at residues Asn-53 and Asn-90. Residue Arg-106 participates in substrate binding. Residue Asn-130 is glycosylated (N-linked (GlcNAc...) asparagine). Residue His-193 is the Proton acceptor of the active site. Tyr-341 provides a ligand contact to substrate. Tyr-371 (for cyclooxygenase activity) is an active-site residue. Residue His-374 participates in heme b binding. Cys-555 and Cys-561 are oxidised to a cystine.

Belongs to the prostaglandin G/H synthase family. In terms of assembly, homodimer. Heme b is required as a cofactor.

The protein resides in the microsome membrane. Its subcellular location is the endoplasmic reticulum membrane. The catalysed reaction is (5Z,8Z,11Z,14Z)-eicosatetraenoate + AH2 + 2 O2 = prostaglandin H2 + A + H2O. It catalyses the reaction (9Z,12Z)-octadecadienoate + AH2 + O2 = (9R)-hydroxy-(10E,12Z)-octadecadienoate + A + H2O. It carries out the reaction (9Z,12Z)-octadecadienoate + AH2 + O2 = (9S)-hydroxy-(10E,12Z)-octadecadienoate + A + H2O. The enzyme catalyses (9Z,12Z)-octadecadienoate + AH2 + O2 = (13S)-hydroxy-(9Z,11E)-octadecadienoate + A + H2O. The catalysed reaction is (9Z,12Z)-octadecadienoate + AH2 + O2 = (13R)-hydroxy-(9Z,11E)-octadecadienoate + A + H2O. The protein operates within lipid metabolism; prostaglandin biosynthesis. Functionally, dual cyclooxygenase and peroxidase in the biosynthesis pathway of prostanoids, a class of C20 oxylipins mainly derived from arachidonate ((5Z,8Z,11Z,14Z)-eicosatetraenoate, AA, C20:4(n-6)), with a particular role in the inflammatory response. The cyclooxygenase activity oxygenates AA to the hydroperoxy endoperoxide prostaglandin G2 (PGG2), and the peroxidase activity reduces PGG2 to the hydroxy endoperoxide prostaglandin H2 (PGH2), the precursor of all 2-series prostaglandins and thromboxanes. This complex transformation is initiated by abstraction of hydrogen at carbon 13 (with S-stereochemistry), followed by insertion of molecular O2 to form the endoperoxide bridge between carbon 9 and 11 that defines prostaglandins. The insertion of a second molecule of O2 (bis-oxygenase activity) yields a hydroperoxy group in PGG2 that is then reduced to PGH2 by two electrons. Similarly catalyzes successive cyclooxygenation and peroxidation of dihomo-gamma-linoleate (DGLA, C20:3(n-6)) and eicosapentaenoate (EPA, C20:5(n-3)) to corresponding PGH1 and PGH3, the precursors of 1- and 3-series prostaglandins. In an alternative pathway of prostanoid biosynthesis, converts 2-arachidonoyl lysophopholipids to prostanoid lysophopholipids, which are then hydrolyzed by intracellular phospholipases to release free prostanoids. Metabolizes 2-arachidonoyl glycerol yielding the glyceryl ester of PGH2, a process that can contribute to pain response. Generates lipid mediators from n-3 and n-6 polyunsaturated fatty acids (PUFAs) via a lipoxygenase-type mechanism. Oxygenates PUFAs to hydroperoxy compounds and then reduces them to corresponding alcohols. Plays a role in the generation of resolution phase interaction products (resolvins) during both sterile and infectious inflammation. Metabolizes docosahexaenoate (DHA, C22:6(n-3)) to 17R-HDHA, a precursor of the D-series resolvins (RvDs). As a component of the biosynthetic pathway of E-series resolvins (RvEs), converts eicosapentaenoate (EPA, C20:5(n-3)) primarily to 18S-HEPE that is further metabolized by ALOX5 and LTA4H to generate 18S-RvE1 and 18S-RvE2. In vascular endothelial cells, converts docosapentaenoate (DPA, C22:5(n-3)) to 13R-HDPA, a precursor for 13-series resolvins (RvTs) shown to activate macrophage phagocytosis during bacterial infection. In activated leukocytes, contributes to oxygenation of hydroxyeicosatetraenoates (HETE) to diHETES (5,15-diHETE and 5,11-diHETE). Can also use linoleate (LA, (9Z,12Z)-octadecadienoate, C18:2(n-6)) as substrate and produce hydroxyoctadecadienoates (HODEs) in a regio- and stereospecific manner, being (9R)-HODE ((9R)-hydroxy-(10E,12Z)-octadecadienoate) and (13S)-HODE ((13S)-hydroxy-(9Z,11E)-octadecadienoate) its major products. During neuroinflammation, plays a role in neuronal secretion of specialized preresolving mediators (SPMs) 15R-lipoxin A4 that regulates phagocytic microglia. In Gallus gallus (Chicken), this protein is Prostaglandin G/H synthase 2 (PTGS2).